A 360-amino-acid polypeptide reads, in one-letter code: Decorin (360 aa).

The N-terminal stretch at 1–16 (MKATIIFLLLAQVSWA) is a signal peptide. The propeptide occupies 17–30 (GPFQQRGLFDFMLE). Ser34 is a glycosylation site (O-linked (Xyl...) (glycosaminoglycan) serine). Intrachain disulfides connect Cys55–Cys61 and Cys59–Cys68. LRR repeat units follow at residues 74–94 (DKVP…NNKI), 95–118 (TEIK…NNKI), 119–142 (SKIS…KNHL), 143–163 (KELP…ENEI), 164–187 (TKVR…TNPL), 188–213 (KSSG…DTNI), 214–234 (TTIP…GNKI), 235–258 (TKVD…FNSI), 259–282 (SAVD…NNKL), 283–305 (IRVP…NNNI), 306–335 (SAVG…SNPV), and 336–360 (QYWE…GNYK). Residue Asn212 is glycosylated (N-linked (GlcNAc...) asparagine). N-linked (GlcNAc...) asparagine glycans are attached at residues Asn263 and Asn304. Cys314 and Cys347 form a disulfide bridge.

It belongs to the small leucine-rich proteoglycan (SLRP) family. SLRP class I subfamily. Binds to type I and type II collagen, fibronectin and TGF-beta. Forms a ternary complex with MFAP2 and ELN. Interacts with DPT. In terms of processing, the attached glycosaminoglycan chain can be either chondroitin sulfate or dermatan sulfate depending upon the tissue of origin.

The protein resides in the secreted. It is found in the extracellular space. It localises to the extracellular matrix. Its function is as follows. May affect the rate of fibrils formation. This Canis lupus familiaris (Dog) protein is Decorin (DCN).